Consider the following 442-residue polypeptide: ATP-dependent protease ATPase subunit HslU (442 aa).

Residues Ile-18, 60 to 65 (GVGKTE), Asp-255, Glu-320, and Arg-392 each bind ATP.

The protein belongs to the ClpX chaperone family. HslU subfamily. A double ring-shaped homohexamer of HslV is capped on each side by a ring-shaped HslU homohexamer. The assembly of the HslU/HslV complex is dependent on binding of ATP.

The protein resides in the cytoplasm. Its function is as follows. ATPase subunit of a proteasome-like degradation complex; this subunit has chaperone activity. The binding of ATP and its subsequent hydrolysis by HslU are essential for unfolding of protein substrates subsequently hydrolyzed by HslV. HslU recognizes the N-terminal part of its protein substrates and unfolds these before they are guided to HslV for hydrolysis. In Aeromonas hydrophila subsp. hydrophila (strain ATCC 7966 / DSM 30187 / BCRC 13018 / CCUG 14551 / JCM 1027 / KCTC 2358 / NCIMB 9240 / NCTC 8049), this protein is ATP-dependent protease ATPase subunit HslU.